We begin with the raw amino-acid sequence, 267 residues long: Pre-protein VI (267 aa).

Residues 1 to 33 (MEDINFASLAPRHGSRPFMGTWNEIGTSQLNGG) constitute a propeptide that is removed on maturation. The tract at residues 34 to 54 (AFSWSSLWSGIKNFGSSIKSF) is amphipathic alpha-helix essential for membrane lytic activity. The segment at 36–53 (SWSSLWSGIKNFGSSIKS) is involved in endosomal membrane lysis. Residues 48–74 (GSSIKSFGNKAWNSNTGQMLRDKLKDQ) form an interaction with hexon protein region. The short motif at 67–76 (LRDKLKDQNF) is the Nuclear export signal element. 2 disordered regions span residues 107–184 (LENS…PMTK) and 199–230 (KPVT…PTAP). 2 stretches are compositionally biased toward basic and acidic residues: residues 123–135 (PKVE…EKLP) and 146–155 (KGEKRPRPDL). The short motif at 149 to 153 (KRPRP) is the Nuclear localization signal element. The PPXY motif signature appears at 166–169 (PPSY). Residues 205 to 217 (LPPPVPTVPPMPA) show a composition bias toward pro residues. A compositionally biased stretch (low complexity) spans 218-230 (PTLGTAVSRPTAP). Positions 248-259 (STLNSIVGLGVK) match the Nuclear export signal motif. Positions 250–256 (LNSIVGL) are interaction with hexon protein. The binds to importin alpha/beta, involved in hexon nuclear import stretch occupies residues 257–267 (GVKSLKRRRCY). The Nuclear localization signal motif lies at 262–265 (KRRR).

The protein belongs to the adenoviridae protein VI family. In terms of assembly, interacts with hexon protein; this interaction allows nuclear import of hexon trimers and possibly pre-capsid assembly. Interacts (via C-terminal NLS) with importin alpha/beta. Interacts (via PPxY motif) with host NEDD4 ubiquitine ligase; this interaction might play a role in virus intracellular transport during entry. Part of a complex composed of the core-capsid bridging protein, the endosome lysis protein VI and the hexon-linking protein VIII; these interactions bridge the virus core to the capsid. Interacts with peripentonal hexons; this interaction stabilizes the capsid by gluing two peripentonal hexons together and joining them with an adjacent group-of-nine hexon. As to quaternary structure, heterodimer with the viral protease; disulfide-linked. Interacts with the viral protease. In terms of processing, ubiquitinated by Nedd4 following partial capsid disassembly; which might play a role in intracellular virus movement during entry. Post-translationally, contains the major nuclear import and export signals. Proteolytically removed during virion maturation. The processing of the C-terminus turns the precursor into a mature viral structural protein and abrogates its ability to promote hexon import and act as a potential chaperone protein.

Its subcellular location is the host nucleus. It is found in the host cytoplasm. It localises to the virion. In terms of biological role, during virus assembly, promotes hexon trimers nuclear import through nuclear pore complexes via an importin alpha/beta-dependent mechanism. By analogy to herpesviruses capsid assembly, might act as a chaperone to promote the formation of the icosahedral capsid. Structural component of the virion that provides increased stability to the particle shell through its interaction with the core-capsid bridging protein and the hexon-linking protein VIII. Fibers shedding during virus entry into host cell allows the endosome lysis protein to be exposed as a membrane-lytic peptide. Exhibits pH-independent membrane fragmentation activity and probably mediates viral rapid escape from host endosome via organellar membrane lysis. It is not clear if it then remains partially associated with the capsid and involved in the intracellular microtubule-dependent transport of capsid to the nucleus, or if it is lost during endosomal penetration. Its function is as follows. Cofactor that activates the viral protease. Binds to viral protease in a 1:1 ratio. The sequence is that of Pre-protein VI from Homo sapiens (Human).